Consider the following 412-residue polypeptide: 2,3-bisphosphoglycerate-independent phosphoglycerate mutase (412 aa).

The protein belongs to the BPG-independent phosphoglycerate mutase family. A-PGAM subfamily.

The catalysed reaction is (2R)-2-phosphoglycerate = (2R)-3-phosphoglycerate. It participates in carbohydrate degradation; glycolysis; pyruvate from D-glyceraldehyde 3-phosphate: step 3/5. Its function is as follows. Catalyzes the interconversion of 2-phosphoglycerate and 3-phosphoglycerate. The chain is 2,3-bisphosphoglycerate-independent phosphoglycerate mutase (apgM) from Pyrococcus horikoshii (strain ATCC 700860 / DSM 12428 / JCM 9974 / NBRC 100139 / OT-3).